The following is a 100-amino-acid chain: Urease subunit gamma (100 aa).

This sequence belongs to the urease gamma subunit family. Heterotrimer of UreA (gamma), UreB (beta) and UreC (alpha) subunits. Three heterotrimers associate to form the active enzyme.

It is found in the cytoplasm. It catalyses the reaction urea + 2 H2O + H(+) = hydrogencarbonate + 2 NH4(+). The protein operates within nitrogen metabolism; urea degradation; CO(2) and NH(3) from urea (urease route): step 1/1. This is Urease subunit gamma from Prochlorococcus marinus (strain AS9601).